Consider the following 451-residue polypeptide: uncharacterized protein (451 aa).

A TRAM domain is found at 2–60 (VVKVKQKIPLKIKRMGINGEGIGFYQKTLVFVPGALKGENIFCQITAVKRNFAEAKLLT). [4Fe-4S] cluster-binding residues include Cys-73, Cys-79, Cys-82, and Cys-162. S-adenosyl-L-methionine is bound by residues Gln-283, Tyr-312, Asp-333, and Asp-381. The Nucleophile role is filled by Cys-408.

Belongs to the class I-like SAM-binding methyltransferase superfamily. RNA M5U methyltransferase family.

This is an uncharacterized protein from Streptococcus pyogenes serotype M3 (strain ATCC BAA-595 / MGAS315).